The primary structure comprises 577 residues: Arginine--tRNA ligase (577 aa).

The 'HIGH' region motif lies at 122–132; the sequence is PNVAKEMHVGH.

It belongs to the class-I aminoacyl-tRNA synthetase family. As to quaternary structure, monomer.

The protein localises to the cytoplasm. It carries out the reaction tRNA(Arg) + L-arginine + ATP = L-arginyl-tRNA(Arg) + AMP + diphosphate. The polypeptide is Arginine--tRNA ligase (Salmonella dublin (strain CT_02021853)).